A 162-amino-acid polypeptide reads, in one-letter code: Protein NrdI (162 aa).

It belongs to the NrdI family.

Functionally, probably involved in ribonucleotide reductase function. This chain is Protein NrdI, found in Streptococcus pyogenes serotype M1.